Consider the following 149-residue polypeptide: Protein FAM72B (149 aa).

The protein belongs to the FAM72 family.

In Homo sapiens (Human), this protein is Protein FAM72B (FAM72B).